The chain runs to 149 residues: Transcriptional repressor NrdR (149 aa).

A zinc finger spans residues 3–34 (CPFCAMEETKVIDSRLVSDGYQVRRRRECGYC). Residues 49–139 (PKIIKNDGSR…VYLSFDDINQ (91 aa)) enclose the ATP-cone domain.

This sequence belongs to the NrdR family. The cofactor is Zn(2+).

Negatively regulates transcription of bacterial ribonucleotide reductase nrd genes and operons by binding to NrdR-boxes. The polypeptide is Transcriptional repressor NrdR (Histophilus somni (strain 129Pt) (Haemophilus somnus)).